Reading from the N-terminus, the 425-residue chain is Histone-binding protein RBBP7 (425 aa).

Alanine 2 is modified (N-acetylalanine). Serine 3 is subject to Phosphoserine. Lysine 4 carries the post-translational modification N6-acetyllysine; alternate. Lysine 4 is covalently cross-linked (Glycyl lysine isopeptide (Lys-Gly) (interchain with G-Cter in SUMO2); alternate). A Glycyl lysine isopeptide (Lys-Gly) (interchain with G-Cter in ubiquitin); alternate cross-link involves residue lysine 4. Residue threonine 10 is modified to Phosphothreonine. WD repeat units lie at residues 47–122 (QWLP…KINH), 128–173 (RARY…LRLR), 181–217 (GLSW…KIVD), 228–269 (VVED…HLVD), 275–312 (VNCL…LHTF), 318–369 (EIFQ…LFIH), and 376–403 (ISDF…IWQM). Phosphoserine is present on serine 95. A Glycyl lysine isopeptide (Lys-Gly) (interchain with G-Cter in SUMO2) cross-link involves residue lysine 101. Residue lysine 119 is modified to N6-acetyllysine. A Glycyl lysine isopeptide (Lys-Gly) (interchain with G-Cter in SUMO2) cross-link involves residue lysine 155. Lysine 159 carries the post-translational modification N6-acetyllysine; alternate. Lysine 159 is covalently cross-linked (Glycyl lysine isopeptide (Lys-Gly) (interchain with G-Cter in SUMO2); alternate). Serine 354 carries the phosphoserine modification.

It belongs to the WD repeat RBAP46/RBAP48/MSI1 family. As to quaternary structure, binds directly to helix 1 of the histone fold of histone H4, a region that is not accessible when H4 is in chromatin. Subunit of the type B histone acetyltransferase (HAT) complex, composed of RBBP7 and HAT1. Subunit of the core histone deacetylase (HDAC) complex, which is composed of HDAC1, HDAC2, RBBP4 and RBBP7. The core HDAC complex associates with SIN3A, ARID4B/SAP180, SAP18, SAP30, SAP130, SUDS3/SAP45 and possibly ARID4A/RBP1 and ING1 to form the SIN3 HDAC complex. Component of the nucleosome remodeling and deacetylase (NuRD) repressor complex, composed of core proteins MTA1, MTA2, MTA3, RBBP4, RBBP7, HDAC1, HDAC2, MBD2, MBD3, and peripherally associated proteins CDK2AP1, CDK2AP2, GATAD2A, GATAD2B, CHD3, CHD4 and CHD5. The exact stoichiometry of the NuRD complex is unknown, and some subunits such as MBD2 and MBD3, GATAD2A and GATAD2B, and CHD3, CHD4 and CHD5 define mutually exclusive NuRD complexes. The NuRD complex may interact with MBD3L1. The NuRD complex may interact with MBD3L2. Subunit of the PRC2/EED-EZH2 complex, which is composed of at least EED, EZH2, RBBP4, RBBP7 and SUZ12. The PRC2/EED-EZH2 complex may also associate with HDAC1. Component of the NURF-1 ISWI chromatin remodeling complex (also called the nucleosome-remodeling factor (NURF) complex) at least composed of SMARCA1, BPTF, RBBP4 and RBBP7. Within the complex interacts with SMARCA1. Component of the BPFT-SMARCA1 complex at least composed of SMARCA1, BPFT, RBBP4 and RBBP7; the complex is catalytically inactive and does not remodel chromatin. Within the complex interacts with SMARCA1. Interacts with BRCA1. Interacts with CDK2AP1. Interacts with CENPA. Interacts with CHD3. Interacts with CHD4. Interacts with CREBBP, and this interaction may be enhanced by the binding of phosphorylated CREB1 to CREBBP. Interacts with HDAC7. Interacts with MTA1. Interacts with PWWP2B. Interacts with RB1 (via viral protein-binding domain). Interacts with SUV39H1.

The protein resides in the nucleus. In terms of biological role, core histone-binding subunit that may target chromatin remodeling factors, histone acetyltransferases and histone deacetylases to their histone substrates in a manner that is regulated by nucleosomal DNA. Component of several complexes which regulate chromatin metabolism. These include the type B histone acetyltransferase (HAT) complex, which is required for chromatin assembly following DNA replication; the core histone deacetylase (HDAC) complex, which promotes histone deacetylation and consequent transcriptional repression; the nucleosome remodeling and histone deacetylase complex (the NuRD complex), which promotes transcriptional repression by histone deacetylation and nucleosome remodeling; and the PRC2/EED-EZH2 complex, which promotes repression of homeotic genes during development; and the NURF (nucleosome remodeling factor) complex. This is Histone-binding protein RBBP7 (RBBP7) from Bos taurus (Bovine).